Reading from the N-terminus, the 449-residue chain is Probable glycine dehydrogenase (decarboxylating) subunit 1 (449 aa).

It belongs to the GcvP family. N-terminal subunit subfamily. In terms of assembly, the glycine cleavage system is composed of four proteins: P, T, L and H. In this organism, the P 'protein' is a heterodimer of two subunits.

It carries out the reaction N(6)-[(R)-lipoyl]-L-lysyl-[glycine-cleavage complex H protein] + glycine + H(+) = N(6)-[(R)-S(8)-aminomethyldihydrolipoyl]-L-lysyl-[glycine-cleavage complex H protein] + CO2. In terms of biological role, the glycine cleavage system catalyzes the degradation of glycine. The P protein binds the alpha-amino group of glycine through its pyridoxal phosphate cofactor; CO(2) is released and the remaining methylamine moiety is then transferred to the lipoamide cofactor of the H protein. The polypeptide is Probable glycine dehydrogenase (decarboxylating) subunit 1 (Pyrococcus abyssi (strain GE5 / Orsay)).